The primary structure comprises 295 residues: MAPSNLPPVFNATSQDIEMLLAAQCHLGSKNLQVHMEPYLWKTRPDGINVINIGKTWEKIVLAARIIAAIDNPADICVISARPYGQRAVLKFAAHTGAVAIAGRFTPGNFTNYITRSFKEPRLIIVTDPRTDSQAIKEASYVNIPVIALCDTDSPTEFVDVAIPTNNKGRHAIGLIWWMLAREVLRLRGTLANRETEWDVVVDLYFYRDPEAEENKEVEETKVPGAEEVGAGAIESGFVGDSWQAQATPGFSAGVAAPGTAVPGWEAEVSTDWAASSAPAAETLADPAADPSVKW.

The interval 273–295 (WAASSAPAAETLADPAADPSVKW) is disordered. The span at 274–295 (AASSAPAAETLADPAADPSVKW) shows a compositional bias: low complexity.

This sequence belongs to the universal ribosomal protein uS2 family. As to quaternary structure, component of the small ribosomal subunit. Mature ribosomes consist of a small (40S) and a large (60S) subunit. The 40S subunit contains about 33 different proteins and 1 molecule of RNA (18S). The 60S subunit contains about 49 different proteins and 3 molecules of RNA (25S, 5.8S and 5S). Interacts with RPS21.

It is found in the cytoplasm. In terms of biological role, required for the assembly and/or stability of the 40S ribosomal subunit. Required for the processing of the 20S rRNA-precursor to mature 18S rRNA in a late step of the maturation of 40S ribosomal subunits. The sequence is that of Small ribosomal subunit protein uS2 from Paracoccidioides lutzii (strain ATCC MYA-826 / Pb01) (Paracoccidioides brasiliensis).